We begin with the raw amino-acid sequence, 559 residues long: Acetylcholinesterase-1 (559 aa).

The signal sequence occupies residues 1–21; the sequence is MMLPRCFVTVLLMSSVLYIGG. A disulfide bridge connects residues C92 and C114. Residue 142–143 participates in substrate binding; that stretch reads GG. Residue S223 is the Acyl-ester intermediate of the active site. A Phosphoserine modification is found at S223. The cysteines at positions 276 and 293 are disulfide-linked. N278 and N342 each carry an N-linked (GlcNAc...) asparagine glycan. The active-site Charge relay system is the E354. The N-linked (GlcNAc...) asparagine glycan is linked to N374. C432 and C550 are joined by a disulfide. Catalysis depends on H471, which acts as the Charge relay system.

The protein belongs to the type-B carboxylesterase/lipase family. In terms of tissue distribution, expressed by the venom gland.

The protein resides in the secreted. It carries out the reaction acetylcholine + H2O = choline + acetate + H(+). Its function is as follows. Terminates signal transduction at the neuromuscular junction by rapid hydrolysis of the acetylcholine released into the synaptic cleft. The sequence is that of Acetylcholinesterase-1 from Trittame loki (Brush-footed trapdoor spider).